A 541-amino-acid polypeptide reads, in one-letter code: Calcium/calmodulin-dependent protein kinase kinase (541 aa).

The segment at 83-106 is disordered; sequence AVQEDDEAGPHSSNNLAATMSPNL. Over residues 93–106 the composition is skewed to polar residues; that stretch reads HSSNNLAATMSPNL. The region spanning 130–411 is the Protein kinase domain; that stretch reads YRLMEEIGQG…LHEVKVHTWV (282 aa). Residues 136 to 144 and Lys159 each bind ATP; that span reads IGQGSYGIV. An RP domain region spans residues 169-190; sequence NFACFRQPPPRRNKENAAPSVL. Asp276 serves as the catalytic Proton acceptor. The interval 437–442 is autoinhibitory domain; it reads ENCVRV. Positions 440-465 are calmodulin-binding; the sequence is VRVIPRLDTLILVKAMGHRKRFGNPF. The interval 462–512 is disordered; sequence GNPFRNKLSAQSSIRDRRKSSSVKDPTYVPPPNSPPATSNNNLNSTKVDRP. Residues 497 to 507 show a composition bias toward low complexity; the sequence is PATSNNNLNST.

Belongs to the protein kinase superfamily. Ser/Thr protein kinase family. It depends on Mg(2+) as a cofactor. In terms of tissue distribution, expressed in head and tail neurons and vulval muscles.

The protein resides in the cytoplasm. The enzyme catalyses L-seryl-[protein] + ATP = O-phospho-L-seryl-[protein] + ADP + H(+). It catalyses the reaction L-threonyl-[protein] + ATP = O-phospho-L-threonyl-[protein] + ADP + H(+). Its activity is regulated as follows. Activated by Ca(2+)/calmodulin. Binding of calmodulin may relieve intrasteric autoinhibition. Functionally, calcium/calmodulin-dependent protein kinase which phosphorylates cmk-1. Component of a calcium-triggered signaling cascade involved in CRE-mediated transcriptional activation, probably through cmk-1-mediated crh-1/CREB phosphorylation. Plays a role in salt-avoidance learning behavior via the phosphorylation of cmk-1. This is Calcium/calmodulin-dependent protein kinase kinase from Caenorhabditis elegans.